A 568-amino-acid polypeptide reads, in one-letter code: Sulfite reductase [NADPH] hemoprotein beta-component (568 aa).

Residues Cys-426, Cys-432, Cys-471, and Cys-475 each contribute to the [4Fe-4S] cluster site. Position 475 (Cys-475) interacts with siroheme.

The protein belongs to the nitrite and sulfite reductase 4Fe-4S domain family. Alpha(8)-beta(8). The alpha component is a flavoprotein, the beta component is a hemoprotein. Requires siroheme as cofactor. [4Fe-4S] cluster is required as a cofactor.

It catalyses the reaction hydrogen sulfide + 3 NADP(+) + 3 H2O = sulfite + 3 NADPH + 4 H(+). Its pathway is sulfur metabolism; hydrogen sulfide biosynthesis; hydrogen sulfide from sulfite (NADPH route): step 1/1. Functionally, component of the sulfite reductase complex that catalyzes the 6-electron reduction of sulfite to sulfide. This is one of several activities required for the biosynthesis of L-cysteine from sulfate. This chain is Sulfite reductase [NADPH] hemoprotein beta-component, found in Xylella fastidiosa (strain M12).